A 413-amino-acid polypeptide reads, in one-letter code: Arginine deiminase (413 aa).

Cysteine 403 (amidino-cysteine intermediate) is an active-site residue.

This sequence belongs to the arginine deiminase family.

The protein localises to the cytoplasm. It catalyses the reaction L-arginine + H2O = L-citrulline + NH4(+). It functions in the pathway amino-acid degradation; L-arginine degradation via ADI pathway; carbamoyl phosphate from L-arginine: step 1/2. The sequence is that of Arginine deiminase from Clostridium perfringens (strain SM101 / Type A).